A 147-amino-acid polypeptide reads, in one-letter code: Small ribosomal subunit protein bS6 (147 aa).

Residues 114–147 (GKGTRAAEQAAAAEAAAPAAAPAEPASAEPAPAV) are disordered. Over residues 119-147 (AAEQAAAAEAAAPAAAPAEPASAEPAPAV) the composition is skewed to low complexity.

Belongs to the bacterial ribosomal protein bS6 family.

Binds together with bS18 to 16S ribosomal RNA. This is Small ribosomal subunit protein bS6 from Koribacter versatilis (strain Ellin345).